A 327-amino-acid polypeptide reads, in one-letter code: MTLEALSSNGLLNFLLSETLSPTPFKSLVDLEPLPENDVIISKNTISEISNQEPPPQRQPPATNRGKKRRRRKPRVCKNEEEAENQRMTHIAVERNRRRQMNQHLSVLRSLMPQPFAHKGDQASIVGGAIDFIKELEHKLLSLEAQKHHNAKLNQSVTSSTSQDSNGEQENPHQPSSLSLSQFFLHSYDPSQENRNGSTSSVKTPMEDLEVTLIETHANIRILSRRRGFRWSTLATTKPPQLSKLVASLQSLSLSILHLSVTTLDNYAIYSISAKVEESCQLSSVDDIAGAVHHMLSIIEEEPFCCSSMSELPFDFSLNHSNVTHSL.

Disordered stretches follow at residues 46–88 and 151–176; these read ISEI…NQRM and AKLN…HQPS. Residues 65 to 76 show a composition bias toward basic residues; the sequence is RGKKRRRRKPRV. The span at 77–88 shows a compositional bias: basic and acidic residues; it reads CKNEEEAENQRM. The 52-residue stretch at 85-136 folds into the bHLH domain; sequence NQRMTHIAVERNRRRQMNQHLSVLRSLMPQPFAHKGDQASIVGGAIDFIKEL. The segment covering 152-169 has biased composition (polar residues); the sequence is KLNQSVTSSTSQDSNGEQ.

As to quaternary structure, homodimer. Interacts with FAMA. In terms of tissue distribution, expressed in leaves, stems, and flowers.

The protein localises to the nucleus. Its function is as follows. Transcription factor. May be involved in the differentiation of stomatal guard cells. This is Transcription factor bHLH71 (BHLH71) from Arabidopsis thaliana (Mouse-ear cress).